Reading from the N-terminus, the 355-residue chain is Peptide chain release factor 1 (355 aa).

Gln231 carries the post-translational modification N5-methylglutamine. The span at 280-291 (SERLAKESEARK) shows a compositional bias: basic and acidic residues. Positions 280–303 (SERLAKESEARKSQVGSGDRSERI) are disordered.

It belongs to the prokaryotic/mitochondrial release factor family. In terms of processing, methylated by PrmC. Methylation increases the termination efficiency of RF1.

Its subcellular location is the cytoplasm. Functionally, peptide chain release factor 1 directs the termination of translation in response to the peptide chain termination codons UAG and UAA. This chain is Peptide chain release factor 1, found in Campylobacter jejuni subsp. jejuni serotype O:6 (strain 81116 / NCTC 11828).